The following is a 754-amino-acid chain: Circadian input-output histidine kinase CikA (754 aa).

The N-terminal domain, not required to complement the deletion strain stretch occupies residues 1-183 (MLAPSSNCSL…QVSAQIRLSL (183 aa)). Positions 184-338 (DLSEILTTTI…RDILQHLAEH (155 aa)) are GAF domain, required to complement the deletion strain. A Histidine kinase domain is found at 390–611 (TMSHELRTPL…TFTVWIPEQT (222 aa)). Position 393 is a phosphohistidine; by autocatalysis (H393). Residues 606-754 (WIPEQTLIEP…NLSEGDRPSS (149 aa)) form a psR domain, required to complement the deletion strain and for cell pole localization, attenuates autophosphorylation activity. Binds KaiB(fs) region. The Response regulatory domain maps to 629-742 (HILLLEEEDE…LLLTTLQGLC (114 aa)).

It in the N-terminal section; belongs to the phytochrome family. In terms of assembly, homodimer. Part of the circadian clock (KaiA, KaiB, KaiC, CikA, RpaA, SasA), the composition of which varies during the circadian cycle. Interacts with LdpA. KaiA and CikA compete for binding to KaiB(fs).

The protein localises to the cytoplasm. It is found in the membrane. The enzyme catalyses ATP + protein L-histidine = ADP + protein N-phospho-L-histidine.. In terms of biological role, functions in an input pathway to the Kai circadian clock. Senses oxidized quinones via its C-terminal pseudo-receiver domain, providing a link between cell metabolism and the clock. Affects the ratio of phosphorylated to unphosphorylated KaiC, binds quinones via its pseudo-receptor domain. Quinone-binding destabilizes the protein rapidly. Autophosphorylates, does not transfer the phosphate to its pseudo-receiver (PsR) domain. May play a role in cell division, as suggested by its polar location and increased cell length in a deletion strain. Its function is as follows. Member of the two-component regulatory system CikA/RpaA output pathway from the circadian clock, negatively regulating kaiBC expression independently of labA and of sasA. One of three clock output pathways. Dephosphorylates phospho-RpaA, enhanced by KaiB and KaiC, has only modest kinase activity on RpaA. A very robust clock is reconstituted with KaiA, KaiB, KaiC, SasA, CikA and RpaA; output is measured by transcription from an appropriate reporter. This chain is Circadian input-output histidine kinase CikA, found in Synechococcus elongatus (strain ATCC 33912 / PCC 7942 / FACHB-805) (Anacystis nidulans R2).